Consider the following 169-residue polypeptide: Der GTPase-activating protein YihI (169 aa).

Disordered stretches follow at residues M1–L99 and S146–N169. Over residues S10–K19 the composition is skewed to basic residues. Over residues T20–D30 the composition is skewed to basic and acidic residues. Residues R31–H40 are compositionally biased toward basic residues. Positions G49–Q58 are enriched in polar residues. Residues Y147–Q159 are compositionally biased toward acidic residues. Residues E160–N169 are compositionally biased toward basic and acidic residues.

This sequence belongs to the YihI family. As to quaternary structure, interacts with Der.

Functionally, a GTPase-activating protein (GAP) that modifies Der/EngA GTPase function. May play a role in ribosome biogenesis. This is Der GTPase-activating protein YihI from Escherichia coli O45:K1 (strain S88 / ExPEC).